Consider the following 423-residue polypeptide: Putative protein phosphatase 2C 50 (423 aa).

The region spanning 52–380 (IFAFPFPTGT…DNMAAVVVPL (329 aa)) is the PPM-type phosphatase domain. D74, G75, D320, and D371 together coordinate Mn(2+).

Belongs to the PP2C family. It depends on Mg(2+) as a cofactor. Mn(2+) is required as a cofactor.

It catalyses the reaction O-phospho-L-seryl-[protein] + H2O = L-seryl-[protein] + phosphate. The catalysed reaction is O-phospho-L-threonyl-[protein] + H2O = L-threonyl-[protein] + phosphate. The polypeptide is Putative protein phosphatase 2C 50 (Arabidopsis thaliana (Mouse-ear cress)).